The chain runs to 87 residues: Putative membrane protein insertion efficiency factor (87 aa).

It belongs to the UPF0161 family.

Its subcellular location is the cell membrane. In terms of biological role, could be involved in insertion of integral membrane proteins into the membrane. The polypeptide is Putative membrane protein insertion efficiency factor (Streptococcus pyogenes serotype M12 (strain MGAS2096)).